The sequence spans 679 residues: Altered inheritance of mitochondria protein 21 (679 aa).

The segment at 1–85 (MPSEVTPKVP…LQRPVRRSTT (85 aa)) is disordered. Over residues 9 to 19 (VPERPSRRKTS) the composition is skewed to basic and acidic residues. Threonine 18 carries the post-translational modification Phosphothreonine. At serine 36 the chain carries Phosphoserine. A Phosphothreonine modification is found at threonine 58. Phosphoserine is present on serine 70. Residue threonine 85 is modified to Phosphothreonine. Serine 104 carries the post-translational modification Phosphoserine. Basic residues predominate over residues 110–119 (NIHNVSRKKS). Disordered regions lie at residues 110–522 (NIHN…EKIE), 549–580 (IDTT…PNKM), and 593–679 (EKLP…FHSL). 2 stretches are compositionally biased toward polar residues: residues 133 to 149 (QNGQ…TNPS) and 164 to 178 (SAIS…SNNE). Basic and acidic residues predominate over residues 179-213 (VTEHSDSEDLTEKQKVHAALDNEAGDRSHFEEKLI). A phosphoserine mark is found at serine 183, serine 206, and serine 231. The span at 243 to 272 (SDDKAEKFTKHPESSLEELQKHQEQQEEKI) shows a compositional bias: basic and acidic residues. Position 277 is a phosphothreonine (threonine 277). Position 284 is a phosphoserine (serine 284). Residues 296-323 (EVNSQPQGPSDTETVIAATSSNVPSQIA) show a composition bias toward polar residues. Position 324 is a phosphoserine (serine 324). 2 stretches are compositionally biased toward basic and acidic residues: residues 339–361 (KKDF…RVSE) and 372–383 (EESKIPKIPSER). The tract at residues 383–396 (RPKRRAPPPVPKKP) is interaction with SH3 domain of ABP1. 2 stretches are compositionally biased toward polar residues: residues 414-427 (DLHN…TTAS) and 437-452 (SSIT…TSKL). Residues 471 to 482 (LEKKLSSPDTES) are compositionally biased toward basic and acidic residues. The span at 501 to 512 (RRGRGPRGRKLP) shows a compositional bias: basic residues. Threonine 552 is modified (phosphothreonine). Residues 556-576 (QAERALDEKSKSIPEEQREQS) show a composition bias toward basic and acidic residues. Serine 576 is modified (phosphoserine). Over residues 603–613 (PLSQLPQTNAV) the composition is skewed to polar residues. 8 positions are modified to phosphoserine: serine 620, serine 623, serine 625, serine 627, serine 667, serine 671, serine 675, and serine 678. The segment covering 667-679 (SALHSEEASFHSL) has biased composition (basic and acidic residues).

It belongs to the AIM21 family. Interacts with ribosomes. Interacts with ABP1.

The protein resides in the cytoplasm. The protein localises to the cytoskeleton. Its subcellular location is the actin patch. Its function is as follows. Involved in mitochondrial migration along actin filaments. The chain is Altered inheritance of mitochondria protein 21 (AIM21) from Saccharomyces cerevisiae (strain ATCC 204508 / S288c) (Baker's yeast).